The following is a 306-amino-acid chain: tRNA-cytidine(32) 2-sulfurtransferase (306 aa).

The PP-loop motif signature appears at 44-49 (SGGKDS). Residues cysteine 119, cysteine 122, and cysteine 210 each contribute to the [4Fe-4S] cluster site.

Belongs to the TtcA family. In terms of assembly, homodimer. Mg(2+) serves as cofactor. Requires [4Fe-4S] cluster as cofactor.

It is found in the cytoplasm. The catalysed reaction is cytidine(32) in tRNA + S-sulfanyl-L-cysteinyl-[cysteine desulfurase] + AH2 + ATP = 2-thiocytidine(32) in tRNA + L-cysteinyl-[cysteine desulfurase] + A + AMP + diphosphate + H(+). Its pathway is tRNA modification. Its function is as follows. Catalyzes the ATP-dependent 2-thiolation of cytidine in position 32 of tRNA, to form 2-thiocytidine (s(2)C32). The sulfur atoms are provided by the cysteine/cysteine desulfurase (IscS) system. This Photorhabdus laumondii subsp. laumondii (strain DSM 15139 / CIP 105565 / TT01) (Photorhabdus luminescens subsp. laumondii) protein is tRNA-cytidine(32) 2-sulfurtransferase.